Reading from the N-terminus, the 375-residue chain is RNA exonuclease 4 (375 aa).

The disordered stretch occupies residues 21–78 (KTLGSDASSSSASSSTNNRRKLSTSESTKPKRTRLDAKEKDAEGSKSCSPAPTSLPWF). Positions 25–35 (SDASSSSASSS) are enriched in low complexity. Positions 53-64 (TRLDAKEKDAEG) are enriched in basic and acidic residues. The Exonuclease domain occupies 134-297 (NYLAIDCEMV…FRSQKPKWDE (164 aa)).

This sequence belongs to the REXO4 family.

The protein localises to the nucleus. Its function is as follows. Exoribonuclease involved in ribosome biosynthesis. Involved in the processing of ITS1, the internal transcribed spacer localized between the 18S and 5.8S rRNAs. In Mycosarcoma maydis (Corn smut fungus), this protein is RNA exonuclease 4 (REX4).